A 138-amino-acid polypeptide reads, in one-letter code: Flagellar basal body rod protein FlgB (138 aa).

It belongs to the flagella basal body rod proteins family. In terms of assembly, the basal body constitutes a major portion of the flagellar organelle and consists of a number of rings mounted on a central rod. In Gram-negative bacteria, at least four rings, L, P, S and M are present, whereas Gram-positive bacteria lack the L and P rings. The rod consists of about 26 subunits of FlgG in the distal portion, and FlgB, FlgC and FlgF build up the proximal portion of the rod with about 6 subunits each. Rod assembly occurs by export via the flagellum-specific pathway of its constituent proteins and by their incorporation into the rod structure in the probable order of FlgB, FlgC, FlgF and FlgG. Another protein, FliE, also assembles onto the stable rod structure. Interacts with FliE and peptidoglycan hydrolase FlgJ (via N-terminus), which seems to function as a scaffold or cap for rod assembly.

Its subcellular location is the bacterial flagellum basal body. In terms of biological role, structural component of flagellum, the bacterial motility apparatus. Part of the rod structure of flagellar basal body. This chain is Flagellar basal body rod protein FlgB (flgB), found in Salmonella typhimurium (strain LT2 / SGSC1412 / ATCC 700720).